The following is a 96-amino-acid chain: Aspartyl/glutamyl-tRNA(Asn/Gln) amidotransferase subunit C (96 aa).

This sequence belongs to the GatC family. Heterotrimer of A, B and C subunits.

It catalyses the reaction L-glutamyl-tRNA(Gln) + L-glutamine + ATP + H2O = L-glutaminyl-tRNA(Gln) + L-glutamate + ADP + phosphate + H(+). It carries out the reaction L-aspartyl-tRNA(Asn) + L-glutamine + ATP + H2O = L-asparaginyl-tRNA(Asn) + L-glutamate + ADP + phosphate + 2 H(+). In terms of biological role, allows the formation of correctly charged Asn-tRNA(Asn) or Gln-tRNA(Gln) through the transamidation of misacylated Asp-tRNA(Asn) or Glu-tRNA(Gln) in organisms which lack either or both of asparaginyl-tRNA or glutaminyl-tRNA synthetases. The reaction takes place in the presence of glutamine and ATP through an activated phospho-Asp-tRNA(Asn) or phospho-Glu-tRNA(Gln). This is Aspartyl/glutamyl-tRNA(Asn/Gln) amidotransferase subunit C from Leptospira borgpetersenii serovar Hardjo-bovis (strain JB197).